The following is a 313-amino-acid chain: Iron-sulfur protein required for NADH dehydrogenase, mitochondrial (313 aa).

A mitochondrion-targeting transit peptide spans 1 to 22 (MATVALLRSLRRRELHAAHISA). 51 to 58 (GKGGVGKS) is an ATP binding site.

This sequence belongs to the Mrp/NBP35 ATP-binding proteins family. It depends on [4Fe-4S] cluster as a cofactor.

Its subcellular location is the mitochondrion matrix. In terms of biological role, essential during early vegetative growth. Required for the assembly of the mitochondrial membrane respiratory chain NADH dehydrogenase (Complex I). Involved in mitochondrial translation activity. May deliver of one or more Fe-S clusters to complex I subunits. This is Iron-sulfur protein required for NADH dehydrogenase, mitochondrial from Arabidopsis thaliana (Mouse-ear cress).